The following is a 320-amino-acid chain: Cytochrome f (320 aa).

A signal peptide spans 1–35 (MQTRNAFSWLKKQITRSISVSLMIYILTRTSISSA). Heme is bound by residues Y36, C56, C59, and H60. The helical transmembrane segment at 286-306 (VQGLLFFLASVILAQIFLVLK) threads the bilayer.

The protein belongs to the cytochrome f family. The 4 large subunits of the cytochrome b6-f complex are cytochrome b6, subunit IV (17 kDa polypeptide, petD), cytochrome f and the Rieske protein, while the 4 small subunits are PetG, PetL, PetM and PetN. The complex functions as a dimer. The cofactor is heme.

The protein localises to the plastid. Its subcellular location is the chloroplast thylakoid membrane. Its function is as follows. Component of the cytochrome b6-f complex, which mediates electron transfer between photosystem II (PSII) and photosystem I (PSI), cyclic electron flow around PSI, and state transitions. This Nicotiana sylvestris (Wood tobacco) protein is Cytochrome f.